We begin with the raw amino-acid sequence, 677 residues long: Forkhead box protein P1 (677 aa).

Positions Met-1–Asn-18 are enriched in polar residues. The disordered stretch occupies residues Met-1 to Ala-43. The residue at position 83 (Ser-83) is a Phosphoserine. Over residues Ile-270–Val-283 the composition is skewed to polar residues. A disordered region spans residues Ile-270–His-298. Residues Pro-286–His-298 are compositionally biased toward basic and acidic residues. Lys-287 is covalently cross-linked (Glycyl lysine isopeptide (Lys-Gly) (interchain with G-Cter in SUMO2)). The C2H2-type zinc finger occupies Gly-306–His-331. Residues Val-348–Leu-369 are leucine-zipper. Glycyl lysine isopeptide (Lys-Gly) (interchain with G-Cter in SUMO2) cross-links involve residues Lys-372 and Lys-377. The segment at Pro-382–Val-386 is CTBP1-binding. The segment covering Thr-390–Leu-403 has biased composition (polar residues). Positions Thr-390–Ser-422 are disordered. Low complexity predominate over residues Pro-404 to Thr-418. Lys-442 participates in a covalent cross-link: Glycyl lysine isopeptide (Lys-Gly) (interchain with G-Cter in SUMO2). A DNA-binding region (fork-head) is located at residues Arg-465–Leu-555. Residues Glu-611–Glu-677 form a disordered region. Residues His-612–Gly-623 show a composition bias toward polar residues. The residue at position 653 (Thr-653) is a Phosphothreonine. Position 658 is a phosphoserine (Ser-658). The span at Tyr-667–Glu-677 shows a compositional bias: acidic residues.

Forms homodimers and heterodimers with FOXP2 and FOXP4. Dimerization is required for DNA-binding. Self-associates. Interacts with CTBP1. Interacts with NCOR2 and AR. Interacts with FOXP2. Interacts with TBR1. Interacts with AURKA; this interaction facilitates the phosphorylation of FOXP1, which suppresses the expression of FBXL7. Interacts with ZMYM2. Isoform 8 is specifically expressed in embryonic stem cells.

It is found in the nucleus. Transcriptional repressor. Can act with CTBP1 to synergistically repress transcription but CTPBP1 is not essential. Plays an important role in the specification and differentiation of lung epithelium. Acts cooperatively with FOXP4 to regulate lung secretory epithelial cell fate and regeneration by restricting the goblet cell lineage program; the function may involve regulation of AGR2. Essential transcriptional regulator of B-cell development. Involved in regulation of cardiac muscle cell proliferation. Involved in the columnar organization of spinal motor neurons. Promotes the formation of the lateral motor neuron column (LMC) and the preganglionic motor column (PGC) and is required for respective appropriate motor axon projections. The segment-appropriate generation of spinal cord motor columns requires cooperation with other Hox proteins. Can regulate PITX3 promoter activity; may promote midbrain identity in embryonic stem cell-derived dopamine neurons by regulating PITX3. Negatively regulates the differentiation of T follicular helper cells T(FH)s. Involved in maintenance of hair follicle stem cell quiescence; the function probably involves regulation of FGF18. Represses transcription of various pro-apoptotic genes and cooperates with NF-kappa B-signaling in promoting B-cell expansion by inhibition of caspase-dependent apoptosis. Binds to CSF1R promoter elements and is involved in regulation of monocyte differentiation and macrophage functions; repression of CSF1R in monocytes seems to involve NCOR2 as corepressor. Involved in endothelial cell proliferation, tube formation and migration indicative for a role in angiogenesis; the role in neovascularization seems to implicate suppression of SEMA5B. Can negatively regulate androgen receptor signaling. Acts as a transcriptional activator of the FBXL7 promoter; this activity is regulated by AURKA. Functionally, involved in transcriptional regulation in embryonic stem cells (ESCs). Stimulates expression of transcription factors that are required for pluripotency and decreases expression of differentiation-associated genes. Has distinct DNA-binding specifities as compared to the canonical form and preferentially binds DNA with the sequence 5'-CGATACAA-3' (or closely related sequences). Promotes ESC self-renewal and pluripotency. The protein is Forkhead box protein P1 (FOXP1) of Homo sapiens (Human).